The following is a 325-amino-acid chain: Tetraacyldisaccharide 4'-kinase (325 aa).

55-62 contributes to the ATP binding site; the sequence is TAGGNGKT.

The protein belongs to the LpxK family.

It carries out the reaction a lipid A disaccharide + ATP = a lipid IVA + ADP + H(+). It participates in glycolipid biosynthesis; lipid IV(A) biosynthesis; lipid IV(A) from (3R)-3-hydroxytetradecanoyl-[acyl-carrier-protein] and UDP-N-acetyl-alpha-D-glucosamine: step 6/6. Functionally, transfers the gamma-phosphate of ATP to the 4'-position of a tetraacyldisaccharide 1-phosphate intermediate (termed DS-1-P) to form tetraacyldisaccharide 1,4'-bis-phosphate (lipid IVA). This is Tetraacyldisaccharide 4'-kinase from Salmonella arizonae (strain ATCC BAA-731 / CDC346-86 / RSK2980).